Here is a 954-residue protein sequence, read N- to C-terminus: Patched domain-containing protein 3 (954 aa).

A compositionally biased stretch (basic and acidic residues) spans 1 to 20; it reads MPWVEPKPRPGPEQKPKLTK. Positions 1 to 103 are disordered; the sequence is MPWVEPKPRP…APLPEEETPE (103 aa). Over residues 42 to 57 the composition is skewed to pro residues; the sequence is QPPPGPLAPPKSPEPS. The span at 90-102 shows a compositional bias: acidic residues; that stretch reads ELDDAPLPEEETP. The helical transmembrane segment at 139 to 159 threads the bilayer; sequence WIFLLAPLMLTAALGTGFLYL. N-linked (GlcNAc...) asparagine glycans are attached at residues Asn-192, Asn-275, and Asn-279. A run of 7 helical transmembrane segments spans residues 297–317, 383–403, 423–443, 447–467, 486–506, 520–540, and 603–623; these read LTGF…QLLL, VIPV…TSCF, FLAV…FVII, SPFL…SAWH, AAVS…TGIM, GMTL…FMAL, and YFVV…CFHV. Residues 383 to 540 enclose the SSD domain; it reads VIPVFHLAYI…ITCFGAFMAL (158 aa). Asn-678, Asn-692, and Asn-737 each carry an N-linked (GlcNAc...) asparagine glycan. 5 helical membrane-spanning segments follow: residues 804–824, 826–846, 858–878, 894–914, and 927–947; these read VLVA…YPLC, LWVT…MAFW, LVIC…AFVS, LLGY…CVLA, and IMFL…PVFL.

This sequence belongs to the patched family. As to expression, expressed in germ cells of the testis (at protein level). Detected in blood lymph, colon, small intestine, ovary, testis, prostate, thymus and spleen with highest levels in testis.

It is found in the cell projection. Its subcellular location is the cilium. It localises to the flagellum membrane. The protein resides in the endoplasmic reticulum membrane. Its function is as follows. May play a role in sperm development or sperm function. However, does not appear to have an essential role in spermatogenesis or male fertility. In Homo sapiens (Human), this protein is Patched domain-containing protein 3 (PTCHD3).